A 199-amino-acid chain; its full sequence is dITP/XTP pyrophosphatase (199 aa).

8–13 contacts substrate; it reads TRNKGK. Glu41 and Asp70 together coordinate Mg(2+). Asp70 functions as the Proton acceptor in the catalytic mechanism. Substrate-binding positions include Ser71, 153-156, Lys176, and 181-182; these read FGYD and HR.

This sequence belongs to the HAM1 NTPase family. Homodimer. Mg(2+) serves as cofactor.

The enzyme catalyses XTP + H2O = XMP + diphosphate + H(+). The catalysed reaction is dITP + H2O = dIMP + diphosphate + H(+). It carries out the reaction ITP + H2O = IMP + diphosphate + H(+). Pyrophosphatase that catalyzes the hydrolysis of nucleoside triphosphates to their monophosphate derivatives, with a high preference for the non-canonical purine nucleotides XTP (xanthosine triphosphate), dITP (deoxyinosine triphosphate) and ITP. Seems to function as a house-cleaning enzyme that removes non-canonical purine nucleotides from the nucleotide pool, thus preventing their incorporation into DNA/RNA and avoiding chromosomal lesions. The sequence is that of dITP/XTP pyrophosphatase from Geobacter sulfurreducens (strain ATCC 51573 / DSM 12127 / PCA).